Consider the following 365-residue polypeptide: DNA polymerase IV 1 (365 aa).

The 191-residue stretch at 6–196 (VLHIDMDYFF…LNVSKLWGIG (191 aa)) folds into the UmuC domain. The Mg(2+) site is built by aspartate 10 and aspartate 113. The active site involves glutamate 114.

It belongs to the DNA polymerase type-Y family. As to quaternary structure, monomer. It depends on Mg(2+) as a cofactor.

Its subcellular location is the cytoplasm. The enzyme catalyses DNA(n) + a 2'-deoxyribonucleoside 5'-triphosphate = DNA(n+1) + diphosphate. In terms of biological role, poorly processive, error-prone DNA polymerase involved in untargeted mutagenesis. Copies undamaged DNA at stalled replication forks, which arise in vivo from mismatched or misaligned primer ends. These misaligned primers can be extended by PolIV. Exhibits no 3'-5' exonuclease (proofreading) activity. May be involved in translesional synthesis. This chain is DNA polymerase IV 1 (dbh1), found in Methanosarcina mazei (strain ATCC BAA-159 / DSM 3647 / Goe1 / Go1 / JCM 11833 / OCM 88) (Methanosarcina frisia).